The chain runs to 449 residues: Deoxyguanosinetriphosphate triphosphohydrolase-like protein (449 aa).

Residues 1 to 27 (MTSSVWQERRHGEDKQRRNDHRSPYQR) form a disordered region. The span at 7–27 (QERRHGEDKQRRNDHRSPYQR) shows a compositional bias: basic and acidic residues. In terms of domain architecture, HD spans 59–255 (RLTHSLEVSQ…MELADDIAYA (197 aa)).

Belongs to the dGTPase family. Type 2 subfamily.

This chain is Deoxyguanosinetriphosphate triphosphohydrolase-like protein, found in Shewanella baltica (strain OS223).